The chain runs to 319 residues: MATRGTVTDFPGFDGRADAEVLRKAMKGLGTDEDSILNLLTSRSNAQRQEIAQEFKTLFGRDLVDDLKSELTGKFEKLIVAMMKPSRLYDAYELKHALKGAGTDEKVLTEIIASRTPEELSAIKQVYEEEYGSNLEDDVVGDTSGYYQRMLVVLLQANRDPDTAIDDAQVELDAQALFQAGELKWGTDEEKFITIFGTRSVSHLRRVFDKYMTISGFQIEETIDRETSGNLEQLLLAVVKSIRSIPAYLAETLYYAMKGAGTDDHTLIRVVVSRSEIDLFNIRKEFRKNFATSLYSMIKGDTSGDYKKALLLLCGGEDD.

Residue alanine 2 is modified to N-acetylalanine. 4 Annexin repeats span residues 13–84, 85–156, 168–240, and 244–315; these read FDGR…AMMK, PSRL…VLLQ, AQVE…AVVK, and SIPA…LLCG. Residue lysine 27 forms a Glycyl lysine isopeptide (Lys-Gly) (interchain with G-Cter in SUMO1); alternate linkage. A Glycyl lysine isopeptide (Lys-Gly) (interchain with G-Cter in SUMO2); alternate cross-link involves residue lysine 27. Serine 35 carries the post-translational modification Phosphoserine. Residues lysine 68, lysine 74, lysine 77, lysine 95, and lysine 99 each carry the N6-acetyllysine modification. Position 288 is an N6-succinyllysine (lysine 288). The [IL]-x-C-x-x-[DE] motif signature appears at 312–318; that stretch reads LLCGGED.

The protein belongs to the annexin family. As to quaternary structure, monomer. Binds ATRX and EIF5B. In terms of processing, S-nitrosylation is induced by interferon-gamma and oxidatively-modified low-densitity lipoprotein (LDL(ox)) possibly implicating the iNOS-S100A8/9 transnitrosylase complex.

Functionally, this protein is an anticoagulant protein that acts as an indirect inhibitor of the thromboplastin-specific complex, which is involved in the blood coagulation cascade. In Mus musculus (Mouse), this protein is Annexin A5 (Anxa5).